We begin with the raw amino-acid sequence, 423 residues long: 3-phosphoshikimate 1-carboxyvinyltransferase (423 aa).

3-phosphoshikimate contacts are provided by Lys19, Ser20, and Arg24. Lys19 provides a ligand contact to phosphoenolpyruvate. The phosphoenolpyruvate site is built by Gly89 and Arg118. The 3-phosphoshikimate site is built by Ser164, Ser165, Gln166, Ser192, Asp304, and Lys331. Gln166 contacts phosphoenolpyruvate. Asp304 functions as the Proton acceptor in the catalytic mechanism. Arg335 and Arg377 together coordinate phosphoenolpyruvate.

It belongs to the EPSP synthase family. As to quaternary structure, monomer.

The protein localises to the cytoplasm. It carries out the reaction 3-phosphoshikimate + phosphoenolpyruvate = 5-O-(1-carboxyvinyl)-3-phosphoshikimate + phosphate. The protein operates within metabolic intermediate biosynthesis; chorismate biosynthesis. In terms of biological role, catalyzes the transfer of the enolpyruvyl moiety of phosphoenolpyruvate (PEP) to the 5-hydroxyl of shikimate-3-phosphate (S3P) to produce enolpyruvyl shikimate-3-phosphate and inorganic phosphate. The protein is 3-phosphoshikimate 1-carboxyvinyltransferase of Korarchaeum cryptofilum (strain OPF8).